Reading from the N-terminus, the 624-residue chain is Chaperone protein DnaK (624 aa).

Thr174 bears the Phosphothreonine; by autocatalysis mark. Disordered stretches follow at residues 470–504 (ITIKSSSGLSDEEIKKMQKDAEEHAEEDKKRKEEV) and 577–624 (NGGA…DPDK). Positions 481–504 (EEIKKMQKDAEEHAEEDKKRKEEV) are enriched in basic and acidic residues. A compositionally biased stretch (low complexity) spans 577 to 605 (NGGAQGAAGQAGPQGPQNGGQPNNDNGSD). The segment covering 615 to 624 (GDFHKVDPDK) has biased composition (basic and acidic residues).

It belongs to the heat shock protein 70 family.

Functionally, acts as a chaperone. This is Chaperone protein DnaK from Lactobacillus johnsonii (strain CNCM I-12250 / La1 / NCC 533).